Here is a 630-residue protein sequence, read N- to C-terminus: FAST kinase domain-containing protein 4 (630 aa).

The region spanning 560–618 (IAFLRWEFPNFNSRSKDLLGRFVLARRHVLAAGFLVVDVPYYEWLDLKSEWQKSAYLKD) is the RAP domain.

The protein belongs to the FAST kinase family. In terms of tissue distribution, expression detected in spleen, testis, colon, heart, smooth muscle, kidney, brain, lung, liver, brown and white adipose tissue with highest expression in testis, heart, smooth muscle and brown adipose tissue.

It is found in the mitochondrion matrix. Functionally, plays a role in processing of mitochondrial RNA precursors and in stabilization of a subset of mature mitochondrial RNA species, such as MT-CO1, MT-CO2, MT-CYB, MT-CO3, MT-ND3, MT-ND5 and MT-ATP8/6. May play a role in cell cycle progression. The sequence is that of FAST kinase domain-containing protein 4 (Tbrg4) from Mus musculus (Mouse).